A 184-amino-acid polypeptide reads, in one-letter code: Probable DNA-directed RNA polymerase subunit delta (184 aa).

The region spanning 14 to 81 (LSMIEVARAI…GENVWALRSW (68 aa)) is the HTH HARE-type domain. 2 disordered regions span residues 88-107 (DEEVNHPEDEEEDDSRKHHK) and 118-184 (GDDD…DEDD). Residues 118-164 (GDDDIIDYDNDDPEDDDLDAATDDSDDDYSDDDSDYDEDNDDADDVL) show a composition bias toward acidic residues.

It belongs to the RpoE family. RNAP is composed of a core of 2 alpha, a beta and a beta' subunits. The core is associated with a delta subunit and one of several sigma factors.

In terms of biological role, participates in both the initiation and recycling phases of transcription. In the presence of the delta subunit, RNAP displays an increased specificity of transcription, a decreased affinity for nucleic acids, and an increased efficiency of RNA synthesis because of enhanced recycling. This is Probable DNA-directed RNA polymerase subunit delta from Lactobacillus acidophilus (strain ATCC 700396 / NCK56 / N2 / NCFM).